Consider the following 170-residue polypeptide: Probable calcium-binding protein CML29 (170 aa).

EF-hand domains lie at 27–62 (SYIS…LGLD), 63–98 (KPEH…GQLG), and 138–170 (ASVE…AQLL). Residues Asp40, Asp42, Asp44, Glu51, Asp76, Asp78, Asp80, Lys82, Glu87, Asp151, Asp153, Asp155, and Glu162 each contribute to the Ca(2+) site.

Potential calcium sensor. The chain is Probable calcium-binding protein CML29 (CML29) from Oryza sativa subsp. japonica (Rice).